The primary structure comprises 130 residues: Small ribosomal subunit protein uS9 (130 aa).

The protein belongs to the universal ribosomal protein uS9 family.

The polypeptide is Small ribosomal subunit protein uS9 (Xanthomonas oryzae pv. oryzae (strain MAFF 311018)).